The primary structure comprises 405 residues: tRNA N6-adenosine threonylcarbamoyltransferase, mitochondrial (405 aa).

Residues 1 to 19 (MAKYISNLSRIAVVRGRVS) constitute a mitochondrion transit peptide. 2 residues coordinate a divalent metal cation: H138 and H142. Residues 160 to 164 (LISGG), D193, G213, E217, 320 to 321 (SN), and T348 contribute to the substrate site. D349 contacts a divalent metal cation.

This sequence belongs to the KAE1 / TsaD family. Monomer. Requires a divalent metal cation as cofactor.

The protein resides in the mitochondrion. The enzyme catalyses L-threonylcarbamoyladenylate + adenosine(37) in tRNA = N(6)-L-threonylcarbamoyladenosine(37) in tRNA + AMP + H(+). Functionally, required for the formation of a threonylcarbamoyl group on adenosine at position 37 (t(6)A37) in mitochondrial tRNAs that read codons beginning with adenine. Probably involved in the transfer of the threonylcarbamoyl moiety of threonylcarbamoyl-AMP (TC-AMP) to the N6 group of A37. Involved in mitochondrial genome maintenance. This Xenopus tropicalis (Western clawed frog) protein is tRNA N6-adenosine threonylcarbamoyltransferase, mitochondrial.